The primary structure comprises 237 residues: MLTRKQYELLRFINERLKEAGVPPSFDEMKDALDLRSKSGIHRLITALEERGFIRRLPNRARAIEVIKLPELGVNPGGGNGRRGFTPSVIEGNLGRVRPAASLGGDDDSGRTVAVPVMGRIAAGTPIEALQTRSHTISMPADMLGSGEHYALEVRGDSMVDAGILDGDMALIQKNDSADTGDIVVALIDEEEATLKRFRRRGASIALEPANAAYEVRILPPNRVRIQGKLIGLYRKY.

A DNA-binding region (H-T-H motif) is located at residues 26-46 (FDEMKDALDLRSKSGIHRLIT). Residues serine 158 and lysine 196 each act as for autocatalytic cleavage activity in the active site.

This sequence belongs to the peptidase S24 family. As to quaternary structure, homodimer.

It carries out the reaction Hydrolysis of Ala-|-Gly bond in repressor LexA.. Its function is as follows. Represses a number of genes involved in the response to DNA damage (SOS response), including recA and lexA. In the presence of single-stranded DNA, RecA interacts with LexA causing an autocatalytic cleavage which disrupts the DNA-binding part of LexA, leading to derepression of the SOS regulon and eventually DNA repair. The chain is LexA repressor from Rhodopseudomonas palustris (strain BisB18).